We begin with the raw amino-acid sequence, 57 residues long: UPF0391 membrane protein XC_2938 (57 aa).

Transmembrane regions (helical) follow at residues 4-24 (WAII…GGMA) and 33-53 (FLFW…MTIA).

The protein belongs to the UPF0391 family.

It localises to the cell membrane. The polypeptide is UPF0391 membrane protein XC_2938 (Xanthomonas campestris pv. campestris (strain 8004)).